Consider the following 113-residue polypeptide: Photosystem II reaction center Psb28 protein (113 aa).

Belongs to the Psb28 family. As to quaternary structure, part of the photosystem II complex.

It is found in the cellular thylakoid membrane. The protein is Photosystem II reaction center Psb28 protein of Prochlorococcus marinus (strain NATL2A).